Consider the following 504-residue polypeptide: Cytochrome P450 3A11 (504 aa).

Cys443 serves as a coordination point for heme.

This sequence belongs to the cytochrome P450 family. Heme serves as cofactor. In terms of tissue distribution, highly expressed in liver.

The protein resides in the endoplasmic reticulum membrane. It is found in the microsome membrane. The enzyme catalyses an organic molecule + reduced [NADPH--hemoprotein reductase] + O2 = an alcohol + oxidized [NADPH--hemoprotein reductase] + H2O + H(+). Functionally, catalyzes erythromycin N-demethylation, nifedipine oxidation and testosterone 6 beta-hydroxylation. The polypeptide is Cytochrome P450 3A11 (Cyp3a11) (Mus musculus (Mouse)).